The primary structure comprises 421 residues: Imidazolonepropionase (421 aa).

Fe(3+)-binding residues include histidine 80 and histidine 82. Residues histidine 80 and histidine 82 each coordinate Zn(2+). Residues arginine 89, tyrosine 152, and histidine 185 each coordinate 4-imidazolone-5-propanoate. Tyrosine 152 is an N-formimidoyl-L-glutamate binding site. Position 249 (histidine 249) interacts with Fe(3+). Histidine 249 serves as a coordination point for Zn(2+). Glutamate 252 contacts 4-imidazolone-5-propanoate. Aspartate 324 is a binding site for Fe(3+). Position 324 (aspartate 324) interacts with Zn(2+). Residues asparagine 326 and glycine 328 each contribute to the N-formimidoyl-L-glutamate site. Serine 329 contacts 4-imidazolone-5-propanoate.

The protein belongs to the metallo-dependent hydrolases superfamily. HutI family. Homodimer. It depends on Zn(2+) as a cofactor. Fe(3+) serves as cofactor.

The protein localises to the cytoplasm. It carries out the reaction 4-imidazolone-5-propanoate + H2O = N-formimidoyl-L-glutamate. It functions in the pathway amino-acid degradation; L-histidine degradation into L-glutamate; N-formimidoyl-L-glutamate from L-histidine: step 3/3. Its function is as follows. Catalyzes the hydrolytic cleavage of the carbon-nitrogen bond in imidazolone-5-propanoate to yield N-formimidoyl-L-glutamate. It is the third step in the universal histidine degradation pathway. This chain is Imidazolonepropionase, found in Bacillus subtilis (strain 168).